The sequence spans 205 residues: MTKRNEAKYKIDRRMGQNIWGRPKSPVNKREYGPGQHGQRRKGKLSDFGTQLRAKQKLKGYYGNISERQFYAIYVEATRMKGDSGENLIGLLERRLDTVVYRAKFVPTIFAARQFINHGHVKVNGRRVNIPSYKLKVGDTVEVKDASKQLALVLEANQLAERDVPDFIDADHNKQSAKFIRIPQLADVPFAVQMEPHLIVEFYSR.

The interval Asn-18–Gly-49 is disordered. Positions Arg-94–Asn-157 constitute an S4 RNA-binding domain.

This sequence belongs to the universal ribosomal protein uS4 family. As to quaternary structure, part of the 30S ribosomal subunit. Contacts protein S5. The interaction surface between S4 and S5 is involved in control of translational fidelity.

One of the primary rRNA binding proteins, it binds directly to 16S rRNA where it nucleates assembly of the body of the 30S subunit. Its function is as follows. With S5 and S12 plays an important role in translational accuracy. The sequence is that of Small ribosomal subunit protein uS4 from Nitrobacter winogradskyi (strain ATCC 25391 / DSM 10237 / CIP 104748 / NCIMB 11846 / Nb-255).